A 79-amino-acid chain; its full sequence is Dolichyl-diphosphooligosaccharide--protein glycosyltransferase subunit TMEM258 (79 aa).

The residue at position 1 (methionine 1) is an N-acetylmethionine. The next 2 helical transmembrane spans lie at 17-37 and 59-79; these read VFPH…AWFF and VASL…GIYI.

It belongs to the OST5 family. In terms of assembly, component of the oligosaccharyltransferase (OST) complex. OST exists in two different complex forms which contain common core subunits RPN1, RPN2, OST48, OST4, DAD1 and TMEM258, either STT3A or STT3B as catalytic subunits, and form-specific accessory subunits. STT3A complex assembly occurs through the formation of 3 subcomplexes. Subcomplex 1 contains RPN1 and TMEM258, subcomplex 2 contains the STT3A-specific subunits STT3A, DC2/OSTC, and KCP2 as well as the core subunit OST4, and subcomplex 3 contains RPN2, DAD1, and OST48. The STT3A complex can form stable complexes with the Sec61 complex or with both the Sec61 and TRAP complexes.

Its subcellular location is the membrane. The protein resides in the endoplasmic reticulum. It localises to the cytoplasm. It participates in protein modification; protein glycosylation. In terms of biological role, subunit of the oligosaccharyl transferase (OST) complex that catalyzes the initial transfer of a defined glycan (Glc(3)Man(9)GlcNAc(2) in eukaryotes) from the lipid carrier dolichol-pyrophosphate to an asparagine residue within an Asn-X-Ser/Thr consensus motif in nascent polypeptide chains, the first step in protein N-glycosylation. N-glycosylation occurs cotranslationally and the complex associates with the Sec61 complex at the channel-forming translocon complex that mediates protein translocation across the endoplasmic reticulum (ER). All subunits are required for a maximal enzyme activity. Involved in ER homeostasis in the colonic epithelium. This Bos taurus (Bovine) protein is Dolichyl-diphosphooligosaccharide--protein glycosyltransferase subunit TMEM258.